Consider the following 396-residue polypeptide: Dihydrolipoyllysine-residue acetyltransferase component of pyruvate dehydrogenase complex (396 aa).

The Lipoyl-binding domain occupies 1 to 69 (MPDIGLEEVE…KTDALIMRCE (69 aa)). Lysine 35 carries the N6-lipoyllysine modification. The Peripheral subunit-binding (PSBD) domain occupies 104–141 (HATPLIRRLARNLNINLYDVVGTGPKNRILKEDLDLYQ). The active site involves histidine 369.

This sequence belongs to the 2-oxoacid dehydrogenase family. Forms a 24-polypeptide structural core with octahedral symmetry. The cofactor is (R)-lipoate.

It catalyses the reaction N(6)-[(R)-dihydrolipoyl]-L-lysyl-[protein] + acetyl-CoA = N(6)-[(R)-S(8)-acetyldihydrolipoyl]-L-lysyl-[protein] + CoA. In terms of biological role, the pyruvate dehydrogenase complex catalyzes the overall conversion of pyruvate to acetyl-CoA and CO(2). It contains multiple copies of three enzymatic components: pyruvate dehydrogenase (E1), dihydrolipoamide acetyltransferase (E2) and lipoamide dehydrogenase (E3). The chain is Dihydrolipoyllysine-residue acetyltransferase component of pyruvate dehydrogenase complex (aceF) from Buchnera aphidicola subsp. Acyrthosiphon pisum (strain APS) (Acyrthosiphon pisum symbiotic bacterium).